A 96-amino-acid polypeptide reads, in one-letter code: MQRRQLEERQRKAEIEAQKDAILRTILTPEARQRLTNVKLVRPELAEAIENQLIALAQSGRIQAQITDDELKQILAQLNSQTRKDYKITIKERGWK.

Belongs to the PDCD5 family.

This Sulfolobus acidocaldarius (strain ATCC 33909 / DSM 639 / JCM 8929 / NBRC 15157 / NCIMB 11770) protein is DNA-binding protein Saci_1468.